We begin with the raw amino-acid sequence, 335 residues long: Dolichyl-diphosphooligosaccharide--protein glycosyltransferase subunit MAGT1 (335 aa).

Positions 1–29 (MASPRWFWSVCAIAAVALLLVSKVPSASA) are cleaved as a signal peptide. The Extracellular segment spans residues 30 to 184 (QRKKEMVLSE…DVNIRVIRPP (155 aa)). The region spanning 47–175 (WANKRPVIRM…IARWIADRTD (129 aa)) is the Thioredoxin domain. An N-linked (GlcNAc...) asparagine glycan is attached at N71. C87 and C90 are joined by a disulfide. The chain crosses the membrane as a helical span at residues 185–205 (NYAGPLMLGLLLAVIGGLVYL). The Cytoplasmic segment spans residues 206–209 (RRSN). The chain crosses the membrane as a helical span at residues 210–230 (MEFLFNKTGWAFAALCFVLAM). The Extracellular portion of the chain corresponds to 231-270 (TSGQMWNHIRGPPYAHKNPHTGHVNYIHGSSQAQFVAETH). The chain crosses the membrane as a helical span at residues 271 to 291 (IVLLFNGGVTLGMVLLCEAAT). Residues 292-300 (SDMDIGKRR) lie on the Cytoplasmic side of the membrane. The chain crosses the membrane as a helical span at residues 301 to 321 (MMCIAGIGLVVLFFSWMLSIF). Over 322–335 (RSKYHGYPYSFLMS) the chain is Extracellular.

Belongs to the OST3/OST6 family. As to quaternary structure, accessory component of the STT3B-containing form of the oligosaccharyltransferase (OST) complex. OST exists in two different complex forms which contain common core subunits RPN1, RPN2, OST48, OST4, DAD1 and TMEM258, either STT3A or STT3B as catalytic subunits, and form-specific accessory subunits. OST can form stable complexes with the Sec61 complex or with both the Sec61 and TRAP complexes. The association of TUSC3 or MAGT1 with the STT3B-containing complex seems to be mutually exclusvice. In terms of tissue distribution, expressed at high levels in kidney, colon, heart and liver. Expressed at lower levels in intestine, spleen, brain and lung.

Its subcellular location is the cell membrane. It localises to the endoplasmic reticulum. The protein localises to the endoplasmic reticulum membrane. It participates in protein modification; protein glycosylation. Functionally, accessory component of the STT3B-containing form of the N-oligosaccharyl transferase (OST) complex which catalyzes the transfer of a high mannose oligosaccharide from a lipid-linked oligosaccharide donor to an asparagine residue within an Asn-X-Ser/Thr consensus motif in nascent polypeptide chains. Involved in N-glycosylation of STT3B-dependent substrates. Specifically required for the glycosylation of a subset of acceptor sites that are near cysteine residues; in this function seems to act redundantly with TUSC3. In its oxidized form proposed to form transient mixed disulfides with a glycoprotein substrate to facilitate access of STT3B to the unmodified acceptor site. Also has oxidoreductase-independent functions in the STT3B-containing OST complex possibly involving substrate recognition. Could indirectly play a role in Mg(2+) transport in epithelial cells. The protein is Dolichyl-diphosphooligosaccharide--protein glycosyltransferase subunit MAGT1 of Mus musculus (Mouse).